The sequence spans 334 residues: Ferrochelatase (334 aa).

His207 and Glu288 together coordinate Fe cation.

This sequence belongs to the ferrochelatase family.

Its subcellular location is the cytoplasm. It carries out the reaction heme b + 2 H(+) = protoporphyrin IX + Fe(2+). It participates in porphyrin-containing compound metabolism; protoheme biosynthesis; protoheme from protoporphyrin-IX: step 1/1. Its function is as follows. Catalyzes the ferrous insertion into protoporphyrin IX. This is Ferrochelatase from Helicobacter pylori (strain P12).